A 374-amino-acid chain; its full sequence is tRNA-specific 2-thiouridylase MnmA (374 aa).

Residues 17-24 (GMSGGVDS) and methionine 43 each bind ATP. The interval 103-105 (NPD) is interaction with target base in tRNA. The Nucleophile role is filled by cysteine 108. Cysteine 108 and cysteine 204 are joined by a disulfide. Glycine 132 contacts ATP. Positions 154 to 156 (KDQ) are interaction with tRNA. Cysteine 204 acts as the Cysteine persulfide intermediate in catalysis. The interaction with tRNA stretch occupies residues 316–317 (RY).

The protein belongs to the MnmA/TRMU family.

Its subcellular location is the cytoplasm. The enzyme catalyses S-sulfanyl-L-cysteinyl-[protein] + uridine(34) in tRNA + AH2 + ATP = 2-thiouridine(34) in tRNA + L-cysteinyl-[protein] + A + AMP + diphosphate + H(+). Functionally, catalyzes the 2-thiolation of uridine at the wobble position (U34) of tRNA, leading to the formation of s(2)U34. This chain is tRNA-specific 2-thiouridylase MnmA, found in Pseudomonas putida (strain W619).